The sequence spans 231 residues: NADH-ubiquinone oxidoreductase chain 4 (231 aa).

The next 6 membrane-spanning stretches (helical) occupy residues 1–21 (PIAG…YGII), 34–54 (LFLP…LTCL), 63–85 (IAYS…TPWG), 89–111 (AMAL…NMTY), 124–146 (GLHN…NIAI), and 169–189 (TIII…HMFL).

The protein belongs to the complex I subunit 4 family.

The protein localises to the mitochondrion membrane. It catalyses the reaction a ubiquinone + NADH + 5 H(+)(in) = a ubiquinol + NAD(+) + 4 H(+)(out). Functionally, core subunit of the mitochondrial membrane respiratory chain NADH dehydrogenase (Complex I) that is believed to belong to the minimal assembly required for catalysis. Complex I functions in the transfer of electrons from NADH to the respiratory chain. The immediate electron acceptor for the enzyme is believed to be ubiquinone. In Crotalus lepidus (Banded rock rattlesnake), this protein is NADH-ubiquinone oxidoreductase chain 4 (MT-ND4).